The following is a 226-amino-acid chain: Cytidylate kinase (226 aa).

ATP is bound at residue 9–17; it reads GPAGAGKST.

It belongs to the cytidylate kinase family. Type 1 subfamily.

It localises to the cytoplasm. The catalysed reaction is CMP + ATP = CDP + ADP. It carries out the reaction dCMP + ATP = dCDP + ADP. The sequence is that of Cytidylate kinase from Clostridium tetani (strain Massachusetts / E88).